The following is a 237-amino-acid chain: Neural retina-specific leucine zipper protein (237 aa).

Glycyl lysine isopeptide (Lys-Gly) (interchain with G-Cter in SUMO) cross-links involve residues K20 and K24. Positions 26–64 (EPSEGRSGVPTASLGSTPYSSVPPSPTFSEPGMVGGGEA) are disordered. Residues 30-93 (GRSGVPTASL…SDEVLGLSPD (64 aa)) are minimal transactivation domain (MTD). Residues 159–185 (RLKQRRRTLKNRGYAQACRSKRLQQRR) form a basic motif region. Residues 159-222 (RLKQRRRTLK…DLYKARCDRL (64 aa)) enclose the bZIP domain. The segment at 187 to 208 (LEAERARLAAQLDALRAEVARL) is leucine-zipper.

The protein belongs to the bZIP family. As to quaternary structure, interacts with FIZ1; this interaction represses transactivation. Interacts (via the leucine-zipper domain) with CRX. Post-translationally, disumoylated at Lys-20. Sumoylation modulates the transcriptional activity of NRL on RHO and NR2E3 promoters, and is required for normal rod differentiation. Phosphorylated. Expressed in the retina (at protein level).

Its subcellular location is the cytoplasm. It is found in the nucleus. Functionally, acts as a transcriptional activator which regulates the expression of several rod-specific genes, including RHO and PDE6B. Also functions as a transcriptional coactivator, stimulating transcription mediated by the transcription factor CRX and NR2E3. Binds to the rhodopsin promoter in a sequence-specific manner. The protein is Neural retina-specific leucine zipper protein (Nrl) of Mus musculus (Mouse).